Reading from the N-terminus, the 586-residue chain is SPbeta prophage-derived uncharacterized protein YorA (586 aa).

13 PbH1 repeats span residues 108-147 (AENV…HVHG), 148-170 (SKNV…WIAA), 184-206 (SKSV…ATNG), 207-235 (CEGL…DLEG), 246-268 (PYEL…TAHT), 288-313 (STDV…DSVG), 320-341 (GNRI…MIRG), 364-384 (AEDV…QIQV), 387-410 (SSDI…KVMD), 411-432 (SNDV…YCER), 435-456 (AVRI…YWDK), 481-504 (MYNI…HLIG), and 505-531 (GSEH…YLNG).

This chain is SPbeta prophage-derived uncharacterized protein YorA (yorA), found in Bacillus subtilis (strain 168).